We begin with the raw amino-acid sequence, 571 residues long: Calcium-dependent protein kinase 16 (571 aa).

The tract at residues 1 to 74 is disordered; that stretch reads MGLCFSSAAK…TRHTPPHGKV (74 aa). Gly2 is lipidated: N-myristoyl glycine. Cys4 is lipidated: S-palmitoyl cysteine. A compositionally biased stretch (basic residues) spans 63-72; it reads TPTRHTPPHG. Residues 108-368 form the Protein kinase domain; sequence YTIGKLLGHG…AAQALSHPWV (261 aa). Residues 114 to 122 and Lys137 contribute to the ATP site; that span reads LGHGQFGYT. Asp234 acts as the Proton acceptor in catalysis. The residue at position 274 (Ser274) is a Phosphoserine. Residues 374–404 are autoinhibitory domain; it reads ASEIPIDISVLNNMRQFVKFSRLKQFALRAL. EF-hand domains lie at 411 to 446, 448 to 483, 490 to 525, and 528 to 555; these read EELA…DHPW, LKDA…VNQL, KWQQ…KGSI, and LLEE…ASIK. Positions 424, 426, 428, 435, 461, 463, 465, 472, 503, 505, 507, 514, 533, 535, 537, and 539 each coordinate Ca(2+). Residue Ser541 is modified to Phosphoserine. Ca(2+) is bound at residue Glu544.

The protein belongs to the protein kinase superfamily. Ser/Thr protein kinase family. CDPK subfamily.

It localises to the cell membrane. Its subcellular location is the nucleus. It catalyses the reaction L-seryl-[protein] + ATP = O-phospho-L-seryl-[protein] + ADP + H(+). It carries out the reaction L-threonyl-[protein] + ATP = O-phospho-L-threonyl-[protein] + ADP + H(+). Activated by calcium. Autophosphorylation may play an important role in the regulation of the kinase activity. May play a role in signal transduction pathways that involve calcium as a second messenger. The chain is Calcium-dependent protein kinase 16 (CPK16) from Arabidopsis thaliana (Mouse-ear cress).